The following is a 103-amino-acid chain: NAD(P)H-quinone oxidoreductase subunit 4L (103 aa).

Helical transmembrane passes span 5–25 (LQYC…GLIT), 32–52 (VLMS…GFSN), and 66–86 (IFVI…VLAI).

Belongs to the complex I subunit 4L family. NDH-1 can be composed of about 15 different subunits; different subcomplexes with different compositions have been identified which probably have different functions.

It is found in the cellular thylakoid membrane. It catalyses the reaction a plastoquinone + NADH + (n+1) H(+)(in) = a plastoquinol + NAD(+) + n H(+)(out). The catalysed reaction is a plastoquinone + NADPH + (n+1) H(+)(in) = a plastoquinol + NADP(+) + n H(+)(out). Functionally, NDH-1 shuttles electrons from an unknown electron donor, via FMN and iron-sulfur (Fe-S) centers, to quinones in the respiratory and/or the photosynthetic chain. The immediate electron acceptor for the enzyme in this species is believed to be plastoquinone. Couples the redox reaction to proton translocation, and thus conserves the redox energy in a proton gradient. Cyanobacterial NDH-1 also plays a role in inorganic carbon-concentration. In Synechocystis sp. (strain ATCC 27184 / PCC 6803 / Kazusa), this protein is NAD(P)H-quinone oxidoreductase subunit 4L.